Reading from the N-terminus, the 85-residue chain is U4-theraphotoxin-Hhn1m (85 aa).

The N-terminal stretch at 1 to 22 is a signal peptide; it reads MKVTLIAILTCAAVLVLHTTAA. The propeptide occupies 23-48; it reads EELEAESQLVEVGMPDTELAAVDEER. Intrachain disulfides connect C52–C66, C56–C77, and C71–C82.

This sequence belongs to the neurotoxin 12 (Hwtx-2) family. 02 (Hwtx-2) subfamily. As to expression, expressed by the venom gland.

It localises to the secreted. Its function is as follows. Postsynaptic neurotoxin. This Cyriopagopus hainanus (Chinese bird spider) protein is U4-theraphotoxin-Hhn1m.